Consider the following 311-residue polypeptide: Ribosomal RNA small subunit methyltransferase H (311 aa).

Residues A32–H34, D52, F79, D100, and Q107 contribute to the S-adenosyl-L-methionine site. Residues S289–R298 show a composition bias toward basic and acidic residues. The segment at S289–K311 is disordered. Basic residues predominate over residues R300–K311.

This sequence belongs to the methyltransferase superfamily. RsmH family.

The protein localises to the cytoplasm. It carries out the reaction cytidine(1402) in 16S rRNA + S-adenosyl-L-methionine = N(4)-methylcytidine(1402) in 16S rRNA + S-adenosyl-L-homocysteine + H(+). In terms of biological role, specifically methylates the N4 position of cytidine in position 1402 (C1402) of 16S rRNA. This Bacillus velezensis (strain DSM 23117 / BGSC 10A6 / LMG 26770 / FZB42) (Bacillus amyloliquefaciens subsp. plantarum) protein is Ribosomal RNA small subunit methyltransferase H.